A 187-amino-acid polypeptide reads, in one-letter code: Elongation factor P (187 aa).

This sequence belongs to the elongation factor P family.

It is found in the cytoplasm. Its pathway is protein biosynthesis; polypeptide chain elongation. Its function is as follows. Involved in peptide bond synthesis. Stimulates efficient translation and peptide-bond synthesis on native or reconstituted 70S ribosomes in vitro. Probably functions indirectly by altering the affinity of the ribosome for aminoacyl-tRNA, thus increasing their reactivity as acceptors for peptidyl transferase. The polypeptide is Elongation factor P (Rhodococcus erythropolis (strain PR4 / NBRC 100887)).